The following is a 354-amino-acid chain: Homeobox-leucine zipper protein HOX27 (354 aa).

Residues 98-175 (SVAAGAPGME…DDEGASARKK (78 aa)) are disordered. Residues 148–157 (QGGGGGGGGE) show a composition bias toward gly residues. The segment at residues 171-230 (SARKKLRLSKEQSAFLEESFKEHSTLNPKQKVALAKQLNLRPRQVEVWFQNRRARTKLKQ) is a DNA-binding region (homeobox). Residues 229-273 (KQTEVDCEYLKRCCETLTEENRRLHKELAELRALKTARPFYMHLP) are leucine-zipper. Residues 294–323 (STSAPAAATSPAAAPTAAARTAVASPEPHR) form a disordered region.

The protein belongs to the HD-ZIP homeobox family. Class II subfamily. Expressed in seedlings, roots, stems, leaf sheaths and blades and panicles.

It localises to the nucleus. In terms of biological role, probable transcription factor. This chain is Homeobox-leucine zipper protein HOX27 (HOX27), found in Oryza sativa subsp. japonica (Rice).